We begin with the raw amino-acid sequence, 83 residues long: Major outer membrane lipoprotein (83 aa).

The first 19 residues, methionine 1–glycine 19, serve as a signal peptide directing secretion. Cysteine 20 carries N-palmitoyl cysteine lipidation. A lipid anchor (S-diacylglycerol cysteine) is attached at cysteine 20.

Its subcellular location is the cell outer membrane. The sequence is that of Major outer membrane lipoprotein (oprI) from Pseudomonas aeruginosa (strain ATCC 15692 / DSM 22644 / CIP 104116 / JCM 14847 / LMG 12228 / 1C / PRS 101 / PAO1).